The chain runs to 277 residues: Purine nucleoside phosphorylase 2 (277 aa).

Residues His-65, 85–87 (RGH), and Ala-117 each bind phosphate. Glu-197 provides a ligand contact to a purine D-ribonucleoside. Phosphate is bound at residue Ser-216. Asn-239 contributes to the a purine D-ribonucleoside binding site.

This sequence belongs to the PNP/MTAP phosphorylase family. Hexamer. Dimer of trimers.

It catalyses the reaction a purine D-ribonucleoside + phosphate = a purine nucleobase + alpha-D-ribose 1-phosphate. It participates in purine metabolism; xanthosine degradation. It functions in the pathway purine metabolism; purine nucleoside salvage. Its activity is regulated as follows. Rapidly inactivated by p-chloromercuriphenylsulfonic acid (p-CMB). Dithiothreitol incubation restores the activity. In terms of biological role, the purine nucleoside phosphorylases catalyze the phosphorolytic breakdown of the N-glycosidic bond in the beta-(deoxy)ribonucleoside molecules, with the formation of the corresponding free purine bases and pentose-1-phosphate. This protein can degrade all purine nucleosides including xanthosine, inosine and guanosine, but cannot cleave adenosine, deoxyadenosine or hypoxanthine arabinoside. Has a preference for the neutral over the monoanionic form of xanthosine. This is Purine nucleoside phosphorylase 2 (xapA) from Escherichia coli (strain K12).